Reading from the N-terminus, the 164-residue chain is Phosphopantetheine adenylyltransferase (164 aa).

S9 provides a ligand contact to substrate. Residues S9–F10 and H17 each bind ATP. K41, V78, and R92 together coordinate substrate. Residues G93–R95, E103, and V128–T134 each bind ATP.

The protein belongs to the bacterial CoaD family. In terms of assembly, homohexamer. The cofactor is Mg(2+).

It localises to the cytoplasm. It catalyses the reaction (R)-4'-phosphopantetheine + ATP + H(+) = 3'-dephospho-CoA + diphosphate. It participates in cofactor biosynthesis; coenzyme A biosynthesis; CoA from (R)-pantothenate: step 4/5. Reversibly transfers an adenylyl group from ATP to 4'-phosphopantetheine, yielding dephospho-CoA (dPCoA) and pyrophosphate. This is Phosphopantetheine adenylyltransferase from Brucella abortus (strain 2308).